The sequence spans 48 residues: uncharacterized protein (48 aa).

A disordered region spans residues 1–20 (MLLKNWPSRRIQRDKSKRAG).

This is an uncharacterized protein from Bacillus subtilis (strain 168).